Here is a 303-residue protein sequence, read N- to C-terminus: Sulfotransferase 6B1 (303 aa).

65–70 (KCGSNW) is a binding site for 3'-phosphoadenylyl sulfate. H118 functions as the Proton acceptor in the catalytic mechanism. Residues R140, S148, Y203, 237-242 (STFQAM), and 259-261 (RKG) contribute to the 3'-phosphoadenylyl sulfate site.

This sequence belongs to the sulfotransferase 1 family. In terms of tissue distribution, specifically expressed in kidney and testis.

Its subcellular location is the cytoplasm. The protein localises to the cytosol. It catalyses the reaction thyroxine + 3'-phosphoadenylyl sulfate = thyroxine sulfate + adenosine 3',5'-bisphosphate + H(+). In terms of biological role, sulfotransferase that utilizes 3'-phospho-5'-adenylyl sulfate (PAPS) as sulfonate donor to catalyze the sulfate conjugation of thyroxine. Involved in the metabolism of thyroxine. The sequence is that of Sulfotransferase 6B1 (SULT6B1) from Homo sapiens (Human).